Here is a 185-residue protein sequence, read N- to C-terminus: MLNQIKKDAQDRMEKSLEALKGHISKIRTGRAQPSLLDAIQVEYYGAATPLRQLANVVAEDARTLAVTVFDRSLISAVEKAILTSDLGLNPSSAGTTIRVPLPPLTEERRRDLIKIVKGEGEQGKVAIRNVRRDANDKIKALLKDKEISENEQHKAEEEIQKITDIYIKKVDEVLADKEKELMDF.

Belongs to the RRF family.

Its subcellular location is the cytoplasm. Its function is as follows. Responsible for the release of ribosomes from messenger RNA at the termination of protein biosynthesis. May increase the efficiency of translation by recycling ribosomes from one round of translation to another. This is Ribosome-recycling factor from Haemophilus influenzae (strain 86-028NP).